A 202-amino-acid polypeptide reads, in one-letter code: Adapter protein MecA 2 (202 aa).

Belongs to the MecA family. As to quaternary structure, homodimer.

In terms of biological role, enables the recognition and targeting of unfolded and aggregated proteins to the ClpC protease or to other proteins involved in proteolysis. Acts negatively in the development of competence by binding ComK and recruiting it to the ClpCP protease. When overexpressed, inhibits sporulation. Also involved in Spx degradation by ClpC. The protein is Adapter protein MecA 2 (mecA2) of Bacillus cereus (strain ATCC 14579 / DSM 31 / CCUG 7414 / JCM 2152 / NBRC 15305 / NCIMB 9373 / NCTC 2599 / NRRL B-3711).